Reading from the N-terminus, the 630-residue chain is ATP synthase subunit alpha (630 aa).

173–180 contacts ATP; the sequence is GDRQTGKT. The segment at 592–630 is disordered; the sequence is AGGASTAADEDGAGDDEEEAPAPKAKSKNAKSASKAKEK. The span at 599–611 shows a compositional bias: acidic residues; the sequence is ADEDGAGDDEEEA.

It belongs to the ATPase alpha/beta chains family. As to quaternary structure, F-type ATPases have 2 components, CF(1) - the catalytic core - and CF(0) - the membrane proton channel. CF(1) has five subunits: alpha(3), beta(3), gamma(1), delta(1), epsilon(1). CF(0) has three main subunits: a(1), b(2) and c(9-12). The alpha and beta chains form an alternating ring which encloses part of the gamma chain. CF(1) is attached to CF(0) by a central stalk formed by the gamma and epsilon chains, while a peripheral stalk is formed by the delta and b chains.

It localises to the cell inner membrane. It catalyses the reaction ATP + H2O + 4 H(+)(in) = ADP + phosphate + 5 H(+)(out). Its function is as follows. Produces ATP from ADP in the presence of a proton gradient across the membrane. The alpha chain is a regulatory subunit. The protein is ATP synthase subunit alpha of Sorangium cellulosum (strain So ce56) (Polyangium cellulosum (strain So ce56)).